A 239-amino-acid polypeptide reads, in one-letter code: uncharacterized protein (239 aa).

Helical transmembrane passes span 30–50 (VALL…IELI), 76–96 (LYLG…IFII), 107–127 (LIPI…FGYI), 157–177 (FIIL…FQIL), 188–208 (MMLS…AIIT), and 214–234 (LIQL…ILVL).

This sequence belongs to the TatC family.

The protein localises to the plastid. Its subcellular location is the chloroplast membrane. This is an uncharacterized protein from Cyanidium caldarium (Red alga).